Here is a 280-residue protein sequence, read N- to C-terminus: Mastin (280 aa).

The signal sequence occupies residues Met-1–Ser-15. Residues Val-16 to Gly-30 constitute a propeptide that is removed on maturation. The region spanning Ile-31 to Pro-275 is the Peptidase S1 domain. Cys-62 and Cys-78 are joined by a disulfide. His-77 (charge relay system) is an active-site residue. Residues Asn-106 and Asn-117 are each glycosylated (N-linked (GlcNAc...) asparagine). Asp-127 serves as the catalytic Charge relay system. Disulfide bonds link Cys-161/Cys-234, Cys-194/Cys-215, and Cys-224/Cys-252. The active-site Charge relay system is Ser-228.

This sequence belongs to the peptidase S1 family. In terms of assembly, oligomer; disulfide-linked. Post-translationally, N-glycosylated. Mononuclear cells within skin, intestine, trachea and lung parenchyma, and polymorphonuclear leukocytes within capillaries and blood.

It localises to the cytoplasm. With respect to regulation, inhibited by leupeptin and bis(5-amidino-2-benzimidazolyl)methane (BABIM). In terms of biological role, trypsin-like serine protease. Has a preference for extended substrates with basic residues at the P1 position; Arg is preferred over Lys. Active towards calcitonin gene-related peptide and gelatin. Not active towards substance P, vasoactive intestinal peptide, type I collagen or azocasein. This Canis lupus familiaris (Dog) protein is Mastin.